The chain runs to 247 residues: Ubiquinone biosynthesis O-methyltransferase (247 aa).

Residues Arg-39, Gly-70, Asp-91, and Met-134 each coordinate S-adenosyl-L-methionine.

The protein belongs to the methyltransferase superfamily. UbiG/COQ3 family.

It carries out the reaction a 3-demethylubiquinol + S-adenosyl-L-methionine = a ubiquinol + S-adenosyl-L-homocysteine + H(+). The catalysed reaction is a 3-(all-trans-polyprenyl)benzene-1,2-diol + S-adenosyl-L-methionine = a 2-methoxy-6-(all-trans-polyprenyl)phenol + S-adenosyl-L-homocysteine + H(+). The protein operates within cofactor biosynthesis; ubiquinone biosynthesis. In terms of biological role, O-methyltransferase that catalyzes the 2 O-methylation steps in the ubiquinone biosynthetic pathway. The chain is Ubiquinone biosynthesis O-methyltransferase from Cereibacter sphaeroides (strain ATCC 17025 / ATH 2.4.3) (Rhodobacter sphaeroides).